Reading from the N-terminus, the 197-residue chain is Small ribosomal subunit protein uS11m (197 aa).

Residues 43–52 (AAKEEVEKAE) show a composition bias toward basic and acidic residues. A disordered region spans residues 43–66 (AAKEEVEKAETPAPAPSRSSFSIY).

This sequence belongs to the universal ribosomal protein uS11 family. As to quaternary structure, component of the mitochondrial ribosome small subunit (28S) which comprises a 12S rRNA and about 30 distinct proteins.

Its subcellular location is the mitochondrion. This chain is Small ribosomal subunit protein uS11m (MRPS11), found in Bos taurus (Bovine).